A 351-amino-acid chain; its full sequence is DNA polymerase IV (351 aa).

Residues 4 to 185 (IIHIDMDCFY…LPLRKIPGVG (182 aa)) enclose the UmuC domain. Positions 8 and 103 each coordinate Mg(2+). E104 is a catalytic residue.

Belongs to the DNA polymerase type-Y family. Monomer. It depends on Mg(2+) as a cofactor.

It localises to the cytoplasm. It catalyses the reaction DNA(n) + a 2'-deoxyribonucleoside 5'-triphosphate = DNA(n+1) + diphosphate. Poorly processive, error-prone DNA polymerase involved in untargeted mutagenesis. Copies undamaged DNA at stalled replication forks, which arise in vivo from mismatched or misaligned primer ends. These misaligned primers can be extended by PolIV. Exhibits no 3'-5' exonuclease (proofreading) activity. May be involved in translesional synthesis, in conjunction with the beta clamp from PolIII. The sequence is that of DNA polymerase IV from Photorhabdus laumondii subsp. laumondii (strain DSM 15139 / CIP 105565 / TT01) (Photorhabdus luminescens subsp. laumondii).